The following is a 141-amino-acid chain: 6,7-dimethyl-8-ribityllumazine synthase (141 aa).

5-amino-6-(D-ribitylamino)uracil is bound by residues Phe13, 45-47, and 69-71; these read SFE and AII. 74 to 75 contributes to the (2S)-2-hydroxy-3-oxobutyl phosphate binding site; sequence DT. His77 acts as the Proton donor in catalysis. Leu102 contributes to the 5-amino-6-(D-ribitylamino)uracil binding site. Residue Arg117 coordinates (2S)-2-hydroxy-3-oxobutyl phosphate.

The protein belongs to the DMRL synthase family.

The enzyme catalyses (2S)-2-hydroxy-3-oxobutyl phosphate + 5-amino-6-(D-ribitylamino)uracil = 6,7-dimethyl-8-(1-D-ribityl)lumazine + phosphate + 2 H2O + H(+). The protein operates within cofactor biosynthesis; riboflavin biosynthesis; riboflavin from 2-hydroxy-3-oxobutyl phosphate and 5-amino-6-(D-ribitylamino)uracil: step 1/2. Functionally, catalyzes the formation of 6,7-dimethyl-8-ribityllumazine by condensation of 5-amino-6-(D-ribitylamino)uracil with 3,4-dihydroxy-2-butanone 4-phosphate. This is the penultimate step in the biosynthesis of riboflavin. This is 6,7-dimethyl-8-ribityllumazine synthase from Methanopyrus kandleri (strain AV19 / DSM 6324 / JCM 9639 / NBRC 100938).